Consider the following 72-residue polypeptide: Translational regulator CsrA (72 aa).

This sequence belongs to the CsrA/RsmA family. As to quaternary structure, homodimer; the beta-strands of each monomer intercalate to form a hydrophobic core, while the alpha-helices form wings that extend away from the core.

Its subcellular location is the cytoplasm. Its function is as follows. A translational regulator that binds mRNA to regulate translation initiation and/or mRNA stability. Usually binds in the 5'-UTR at or near the Shine-Dalgarno sequence preventing ribosome-binding, thus repressing translation. Its main target seems to be the major flagellin gene, while its function is anatagonized by FliW. This Ruminiclostridium cellulolyticum (strain ATCC 35319 / DSM 5812 / JCM 6584 / H10) (Clostridium cellulolyticum) protein is Translational regulator CsrA.